Here is a 563-residue protein sequence, read N- to C-terminus: Coiled-coil domain-containing protein 38 (563 aa).

3 coiled-coil regions span residues 129–212 (KRNT…KTEF), 384–415 (NIEF…RSRL), and 485–522 (ERMK…AVAQ). The tract at residues 521–550 (AQPKKKLGRRLVYHSKPPSANKQQLPLVNE) is disordered. Residues 523–533 (PKKKLGRRLVY) are compositionally biased toward basic residues.

As to quaternary structure, interacts with CCDC42, CFAP53, IFT88 and ODF2. Interacts with CCDC146. Interacts with TEKT3. Interacts with ubiquitinated histone H2A.

The protein resides in the cytoplasm. Its subcellular location is the cytoskeleton. It is found in the microtubule organizing center. It localises to the centrosome. The protein localises to the perinuclear region. The protein resides in the cell projection. Its subcellular location is the cilium. It is found in the flagellum. Functionally, essential for male fertility. Required for sperm flagellum biogenesis. Also required for acrosome biogenesis. Required for the attachment of developing acrosomes to the nucleus during spermiogenesis and may be involved in the transport of fibrous sheath components. The chain is Coiled-coil domain-containing protein 38 (CCDC38) from Macaca fascicularis (Crab-eating macaque).